The sequence spans 162 residues: Nucleotide-binding protein ACIAD3137 (162 aa).

This sequence belongs to the YajQ family.

Nucleotide-binding protein. This Acinetobacter baylyi (strain ATCC 33305 / BD413 / ADP1) protein is Nucleotide-binding protein ACIAD3137.